We begin with the raw amino-acid sequence, 437 residues long: GTPase Der (437 aa).

EngA-type G domains are found at residues 4-168 and 177-352; these read PVVA…PAED and IRVS…QAHS. Residues 10–17, 57–61, 120–123, 183–190, 230–234, and 295–298 contribute to the GTP site; these read GRPNVGKS, DTGGI, NKAD, DTAGM, and NKWD. Residues 353–437 enclose the KH-like domain; sequence MRIPTAVLND…PVRIWTRKKT (85 aa).

Belongs to the TRAFAC class TrmE-Era-EngA-EngB-Septin-like GTPase superfamily. EngA (Der) GTPase family. Associates with the 50S ribosomal subunit.

Functionally, GTPase that plays an essential role in the late steps of ribosome biogenesis. The polypeptide is GTPase Der (Brevibacillus brevis (strain 47 / JCM 6285 / NBRC 100599)).